The primary structure comprises 354 residues: 5,10-methenyltetrahydromethanopterin hydrogenase (354 aa).

This sequence belongs to the HMD family.

It catalyses the reaction 5,10-methenyl-5,6,7,8-tetrahydromethanopterin + H2 = 5,10-methylenetetrahydromethanopterin + H(+). It participates in one-carbon metabolism; methanogenesis from CO(2); 5,10-methylene-5,6,7,8-tetrahydromethanopterin from 5,10-methenyl-5,6,7,8-tetrahydromethanopterin (hydrogen route): step 1/1. Functionally, catalyzes the reversible reduction of methenyl-H(4)MPT(+) to methylene-H(4)MPT. The protein is 5,10-methenyltetrahydromethanopterin hydrogenase of Methanococcus maripaludis (strain C5 / ATCC BAA-1333).